A 308-amino-acid chain; its full sequence is Aspartate carbamoyltransferase catalytic subunit (308 aa).

Residues arginine 55 and threonine 56 each coordinate carbamoyl phosphate. Position 83 (lysine 83) interacts with L-aspartate. Positions 105, 133, and 136 each coordinate carbamoyl phosphate. L-aspartate is bound by residues arginine 166 and arginine 220. Residues glycine 261 and proline 262 each contribute to the carbamoyl phosphate site.

The protein belongs to the aspartate/ornithine carbamoyltransferase superfamily. ATCase family. As to quaternary structure, heterododecamer (2C3:3R2) of six catalytic PyrB chains organized as two trimers (C3), and six regulatory PyrI chains organized as three dimers (R2).

The catalysed reaction is carbamoyl phosphate + L-aspartate = N-carbamoyl-L-aspartate + phosphate + H(+). It functions in the pathway pyrimidine metabolism; UMP biosynthesis via de novo pathway; (S)-dihydroorotate from bicarbonate: step 2/3. In terms of biological role, catalyzes the condensation of carbamoyl phosphate and aspartate to form carbamoyl aspartate and inorganic phosphate, the committed step in the de novo pyrimidine nucleotide biosynthesis pathway. This Chlorobaculum tepidum (strain ATCC 49652 / DSM 12025 / NBRC 103806 / TLS) (Chlorobium tepidum) protein is Aspartate carbamoyltransferase catalytic subunit.